Here is a 709-residue protein sequence, read N- to C-terminus: MAREFSLANTRNIGIMAHVDAGKTTTTERVLYYTGKIHKIGETHEGASQMDWMEQEQERGITITSAATTAEWKGNRVNIIDTPGHVDFTIEVQRSLRVLDGAVTVLDAQSGVEPQTETVWRQATEYGVPRIVFANKMDKIGADFYYSLSTLGDRLGANAHPIQIPIGAEDDFIGIIDLVTMKSEIYTNDLGTDIKETVVGSDEFNAELASLDFNAEEYTELANEWREKLIEAIADFDEDIMEKYFAGEEIPEAELKAAIRKATINVDFYPMLAGSAFKNKGVQMMLDAVIDYLPSPLDIPAIQGVNPDTDEEDERPASDEEPFAALAFKIMTDPFVGRLSFFRVYSGTLDAGSYVLNTSKGKRERIGRILQMHANTRKEIQTVYAGDIAAAVGLKNTTTGDSLTDEKAKIILESIEVPEPVIQLMVEPKTKADQDKMGVALQKLAEEDPTFRVETNPETGETVISGMGELHLDVLVDRMKREFKVEANVGAPQVAYRETFRAGTSARGFFKRQSGGKGQYGDVWIEFTPNEEGAGFEFENAIVGGVVPREFVPAVEKGLVETMANGVLAGYPMVDIKAKLYDGSYHDVDSSETAFKVAASLAMKEAAKTAKPAILEPMMKVTITVPEENLGDIMGHVTARRGQVNSMEAHGKSQIVNAFVPLAEMFGYATTLRSSTQGRGTFMMVFDHYSDVPKSVQEEIIAKNGRNAD.

The 290-residue stretch at 8–297 (ANTRNIGIMA…AVIDYLPSPL (290 aa)) folds into the tr-type G domain. GTP contacts are provided by residues 17 to 24 (AHVDAGKT), 81 to 85 (DTPGH), and 135 to 138 (NKMD).

The protein belongs to the TRAFAC class translation factor GTPase superfamily. Classic translation factor GTPase family. EF-G/EF-2 subfamily.

It is found in the cytoplasm. Its function is as follows. Catalyzes the GTP-dependent ribosomal translocation step during translation elongation. During this step, the ribosome changes from the pre-translocational (PRE) to the post-translocational (POST) state as the newly formed A-site-bound peptidyl-tRNA and P-site-bound deacylated tRNA move to the P and E sites, respectively. Catalyzes the coordinated movement of the two tRNA molecules, the mRNA and conformational changes in the ribosome. This chain is Elongation factor G, found in Lactococcus lactis subsp. cremoris (strain MG1363).